The following is a 493-amino-acid chain: Lysine--tRNA ligase (493 aa).

Positions 403 and 410 each coordinate Mg(2+).

This sequence belongs to the class-II aminoacyl-tRNA synthetase family. In terms of assembly, homodimer. Requires Mg(2+) as cofactor.

Its subcellular location is the cytoplasm. The enzyme catalyses tRNA(Lys) + L-lysine + ATP = L-lysyl-tRNA(Lys) + AMP + diphosphate. This is Lysine--tRNA ligase from Wigglesworthia glossinidia brevipalpis.